The chain runs to 101 residues: Urease subunit beta (101 aa).

It belongs to the urease beta subunit family. In terms of assembly, heterotrimer of UreA (gamma), UreB (beta) and UreC (alpha) subunits. Three heterotrimers associate to form the active enzyme.

It localises to the cytoplasm. It carries out the reaction urea + 2 H2O + H(+) = hydrogencarbonate + 2 NH4(+). Its pathway is nitrogen metabolism; urea degradation; CO(2) and NH(3) from urea (urease route): step 1/1. This Variovorax paradoxus (strain S110) protein is Urease subunit beta.